The chain runs to 144 residues: Ferredoxin-thioredoxin reductase catalytic chain, chloroplastic (144 aa).

A chloroplast-targeting transit peptide spans 1–31 (MTTQASTFAVAVPSVATPFRRHRNPFVVRAQ). Cys-83 serves as a coordination point for [4Fe-4S] cluster. Cys-85 serves as the catalytic Nucleophile. Cys-85 and Cys-115 are joined by a disulfide. Positions 102, 104, and 113 each coordinate [4Fe-4S] cluster.

This sequence belongs to the ferredoxin thioredoxin reductase beta subunit family. As to quaternary structure, heterodimer of subunit A (variable subunit) and subunit B (catalytic subunit). Heterodimeric FTR forms a complex with ferredoxin and thioredoxin. The cofactor is [4Fe-4S] cluster.

Its subcellular location is the plastid. It is found in the chloroplast. The enzyme catalyses [thioredoxin]-disulfide + 2 reduced [2Fe-2S]-[ferredoxin] + 2 H(+) = [thioredoxin]-dithiol + 2 oxidized [2Fe-2S]-[ferredoxin]. Catalytic subunit of the ferredoxin-thioredoxin reductase (FTR), which catalyzes the two-electron reduction of thioredoxins by the electrons provided by reduced ferredoxin. This is Ferredoxin-thioredoxin reductase catalytic chain, chloroplastic (FTRC) from Glycine max (Soybean).